Reading from the N-terminus, the 188-residue chain is ATP-dependent protease subunit HslV (188 aa).

The active site involves T8. Residues A165, C168, and T171 each coordinate Na(+).

The protein belongs to the peptidase T1B family. HslV subfamily. As to quaternary structure, a double ring-shaped homohexamer of HslV is capped on each side by a ring-shaped HslU homohexamer. The assembly of the HslU/HslV complex is dependent on binding of ATP.

It localises to the cytoplasm. The catalysed reaction is ATP-dependent cleavage of peptide bonds with broad specificity.. Allosterically activated by HslU binding. In terms of biological role, protease subunit of a proteasome-like degradation complex believed to be a general protein degrading machinery. This chain is ATP-dependent protease subunit HslV, found in Neorickettsia sennetsu (strain ATCC VR-367 / Miyayama) (Ehrlichia sennetsu).